The following is a 49-amino-acid chain: uncharacterized protein (49 aa).

The first 22 residues, 1-22 (MIQKPILLSSFLFLYIRALLHS), serve as a signal peptide directing secretion.

This is an uncharacterized protein from Saccharomyces cerevisiae (strain ATCC 204508 / S288c) (Baker's yeast).